A 152-amino-acid chain; its full sequence is Ribosome maturation factor RimP (152 aa).

The protein belongs to the RimP family.

Its subcellular location is the cytoplasm. Required for maturation of 30S ribosomal subunits. The chain is Ribosome maturation factor RimP from Burkholderia vietnamiensis (strain G4 / LMG 22486) (Burkholderia cepacia (strain R1808)).